Consider the following 579-residue polypeptide: Nif-specific regulatory protein (579 aa).

One can recognise a GAF domain in the interval 40–187 (DPVAEVPQIF…MVASLLEQAL (148 aa)). Residues 226–454 (IVGSSPAIAE…LENCVNRAAA (229 aa)) enclose the Sigma-54 factor interaction domain. ATP-binding positions include 254–261 (GESGTGKE) and 317–326 (ADGGTLFLDE). Positions 464–536 (EELACRQGAC…PLRTKTAQLS (73 aa)) are inter-domain linker. A divalent metal cation is bound by residues C468 and C473. Residues 502 to 529 (RVSAPPPEPAPAPEPAPEAPPREEVPLR) form a disordered region. 7 tandem repeats follow at residues 505–506 (AP), 507–508 (PP), 509–510 (EP), 511–512 (AP), 513–514 (AP), 515–516 (EP), and 517–518 (AP). The tract at residues 505 to 518 (APPPEPAPAPEPAP) is 7 X 2 AA tandem repeats of X-P. A compositionally biased stretch (pro residues) spans 505-520 (APPPEPAPAPEPAPEA). A C-terminal DNA-binding domain region spans residues 537–579 (REELLRALESAGWVQAKAARLLGMTPRQIAYALQKFEIELRKI). Positions 551 to 570 (QAKAARLLGMTPRQIAYALQ) form a DNA-binding region, H-T-H motif.

Interacts with sigma-54.

In terms of biological role, required for activation of most nif operons, which are directly involved in nitrogen fixation. The sequence is that of Nif-specific regulatory protein (nifA1) from Rhodobacter capsulatus (Rhodopseudomonas capsulata).